The primary structure comprises 2065 residues: Cytoskeleton-associated protein 5-A (2065 aa).

TOG stretches follow at residues 1–240 (MGDD…DLKA) and 264–515 (VDAY…KETK). HEAT repeat units lie at residues 120-157 (EKAE…EFGS), 160-197 (MTLK…WIRD), 270-311 (LEAV…NPKI), 314-352 (GDFA…GLRK), 356-393 (SYAG…TTTL), 395-432 (NISE…STLP), and 436-477 (LKPF…VNPF). A disordered region spans residues 500 to 574 (NGKKGGAAAG…GATAKGKKAV (75 aa)). A compositionally biased stretch (low complexity) spans 538 to 568 (KAAAAPKKAPAAKPGGPVKKAKAPASSGATA). Positions 644-808 (KPGFKETNFQ…LSQIDAEFEK (165 aa)) are TOG 3. 2 HEAT repeats span residues 652 to 689 (FQVM…KVGD) and 748 to 785 (INVK…YMGA). The tract at residues 809-849 (MKGQTPPVSIRGSKHGSGRDEGEEGEEQDEDAPADVTDLLP) is disordered. Residues 829–841 (EGEEGEEQDEDAP) are compositionally biased toward acidic residues. Positions 846–1090 (DLLPRTDISD…AGPPGKASSK (245 aa)) are TOG 4. HEAT repeat units lie at residues 852-889 (DISD…EAKF), 892-929 (PSIG…AMGH), 933-970 (QHVK…QTGM), and 1015-1052 (CVPY…KMSK). The span at 1074 to 1115 (ASMPAKPAGPPGKASSKQPPAVAQASASPPPAASSDSGSSTS) shows a compositional bias: low complexity. Positions 1074 to 1192 (ASMPAKPAGP…AKDEEDKSGP (119 aa)) are disordered. Residues 1126 to 1163 (PGTQASKAKTQSVSSEGNTSLNPSNTSLTPSKANTSLS) show a composition bias toward polar residues. The interval 1150 to 1235 (NTSLTPSKAN…IEQLKTQMSP (86 aa)) is interaction with microtubule lattice. The segment at 1191-1460 (GPIYIIVPNG…ERIKRAGKKQ (270 aa)) is TOG 5. HEAT repeat units follow at residues 1251 to 1288 (QRQI…RFFD), 1295 to 1318 (MKCL…LTEM), 1319 to 1355 (EGTS…VYPA), 1357 to 1390 (KMFN…SYGM), and 1395 to 1432 (PTPA…VHGE). 2 disordered regions span residues 1982–2001 (DNAK…KSSA) and 2028–2065 (VELD…SSRK). An interaction with tacc3 region spans residues 2002–2065 (PAVVSSTDML…RLERIKSSRK (64 aa)). Over residues 2038 to 2048 (STTTSSSASST) the composition is skewed to low complexity. Residues 2051 to 2065 (DDLKKRLERIKSSRK) show a composition bias toward basic and acidic residues.

The protein belongs to the TOG/XMAP215 family. Interacts with tacc3; two molecules of ckap5 interact with 1 molecule of tacc3 probably mediated by coiled coil domains forming a four-helix bundle. Interacts with tacc3 and clathrin forming the TACC3/ch-TOG/clathrin complex located at spindle inter-microtubules bridges. Interacts with ndc80; indicative for an association with the NDC80 comnplex.

The protein resides in the cytoplasm. It is found in the cytoskeleton. It localises to the spindle pole. The protein localises to the spindle. Its subcellular location is the microtubule organizing center. The protein resides in the centrosome. It is found in the chromosome. It localises to the centromere. The protein localises to the kinetochore. Functionally, binds to the plus end of microtubules and regulates microtubule dynamics and microtubule organization. Acts as a processive microtubule polymerase. Promotes cytoplasmic microtubule nucleation and elongation. Plays a major role in organizing spindle poles. In spindle formation protects kinetochore microtubules from depolymerization by kif2c and has an essential role in centrosomal microtubule assembly independently of kif2c activity. Contributes to centrosome integrity. Acts as a component of the TACC3/ch-TOG/clathrin complex proposed to contribute to stabilization of kinetochore fibers of the mitotic spindle by acting as inter-microtubule bridge. Enhances the strength of NDC80 complex-mediated kinetochore-tip microtubule attachments. The polypeptide is Cytoskeleton-associated protein 5-A (ckap5-a) (Xenopus laevis (African clawed frog)).